The primary structure comprises 510 residues: 2,3-bisphosphoglycerate-independent phosphoglycerate mutase (510 aa).

Asp-12 and Ser-62 together coordinate Mn(2+). Ser-62 (phosphoserine intermediate) is an active-site residue. Residues His-123, 153–154, Arg-185, Arg-191, 260–263, and Lys-335 each bind substrate; these read RD and RPDR. Asp-402, His-406, Asp-443, His-444, and His-461 together coordinate Mn(2+).

The protein belongs to the BPG-independent phosphoglycerate mutase family. In terms of assembly, monomer. The cofactor is Mn(2+).

It catalyses the reaction (2R)-2-phosphoglycerate = (2R)-3-phosphoglycerate. The protein operates within carbohydrate degradation; glycolysis; pyruvate from D-glyceraldehyde 3-phosphate: step 3/5. Catalyzes the interconversion of 2-phosphoglycerate and 3-phosphoglycerate. In Listeria welshimeri serovar 6b (strain ATCC 35897 / DSM 20650 / CCUG 15529 / CIP 8149 / NCTC 11857 / SLCC 5334 / V8), this protein is 2,3-bisphosphoglycerate-independent phosphoglycerate mutase.